Reading from the N-terminus, the 617-residue chain is Type VII secretion systems protein EssD (617 aa).

The segment at 420–448 (QNHVTHGPKDSMVRSEGKHSISSHEMNSS) is disordered. Residues 426–438 (GPKDSMVRSEGKH) show a composition bias toward basic and acidic residues.

Belongs to the EssD family. As to quaternary structure, interacts (via C-terminal) with EssG; this interaction blocks EssD activity. Interacts with EssE.

It localises to the secreted. It is found in the cell membrane. Functionally, component of the type VII secretion system (Ess). Plays a role in Ess secretion during infection. Required for the efficient secretion of EsxA. Required for abscess formation and staphylococcal persistence in host tissue. Possesses a toxic DNase activity that is modulated by EssG by forming a nuclease toxin-antitoxin pair. This nuclease toxin targets competitor bacteria. The chain is Type VII secretion systems protein EssD from Staphylococcus aureus (strain Newman).